A 264-amino-acid polypeptide reads, in one-letter code: DNA repair protein RecO (264 aa).

The protein belongs to the RecO family.

In terms of biological role, involved in DNA repair and RecF pathway recombination. This is DNA repair protein RecO from Leuconostoc citreum (strain KM20).